The primary structure comprises 274 residues: Diaminopimelate epimerase (274 aa).

Substrate contacts are provided by Asn-11, Gln-44, and Asn-64. Cys-73 acts as the Proton donor in catalysis. Substrate-binding positions include 74–75 (GN), Asn-157, Asn-190, and 208–209 (ER). The Proton acceptor role is filled by Cys-217. Position 218 to 219 (218 to 219 (GS)) interacts with substrate.

It belongs to the diaminopimelate epimerase family. As to quaternary structure, homodimer.

The protein resides in the cytoplasm. The enzyme catalyses (2S,6S)-2,6-diaminopimelate = meso-2,6-diaminopimelate. Its pathway is amino-acid biosynthesis; L-lysine biosynthesis via DAP pathway; DL-2,6-diaminopimelate from LL-2,6-diaminopimelate: step 1/1. Catalyzes the stereoinversion of LL-2,6-diaminopimelate (L,L-DAP) to meso-diaminopimelate (meso-DAP), a precursor of L-lysine and an essential component of the bacterial peptidoglycan. This Shigella boydii serotype 18 (strain CDC 3083-94 / BS512) protein is Diaminopimelate epimerase.